Here is a 109-residue protein sequence, read N- to C-terminus: Spermidine export protein MdtI (109 aa).

4 consecutive transmembrane segments (helical) span residues Trp6–Leu26, Trp36–Val56, Ala64–Phe84, and Leu88–Leu108.

This sequence belongs to the drug/metabolite transporter (DMT) superfamily. Small multidrug resistance (SMR) (TC 2.A.7.1) family. MdtI subfamily. Forms a complex with MdtJ.

Its subcellular location is the cell inner membrane. Functionally, catalyzes the excretion of spermidine. In Enterobacter sp. (strain 638), this protein is Spermidine export protein MdtI.